We begin with the raw amino-acid sequence, 149 residues long: 3-dehydroquinate dehydratase (149 aa).

Tyrosine 22 functions as the Proton acceptor in the catalytic mechanism. Substrate contacts are provided by asparagine 73, histidine 79, and aspartate 86. Catalysis depends on histidine 99, which acts as the Proton donor. Residues 100–101 (LS) and arginine 110 each bind substrate.

The protein belongs to the type-II 3-dehydroquinase family. As to quaternary structure, homododecamer.

It catalyses the reaction 3-dehydroquinate = 3-dehydroshikimate + H2O. It participates in metabolic intermediate biosynthesis; chorismate biosynthesis; chorismate from D-erythrose 4-phosphate and phosphoenolpyruvate: step 3/7. Catalyzes a trans-dehydration via an enolate intermediate. This chain is 3-dehydroquinate dehydratase, found in Prochlorococcus marinus (strain SARG / CCMP1375 / SS120).